A 145-amino-acid chain; its full sequence is Monooxygenase AacuP (145 aa).

Belongs to the avfA family.

It functions in the pathway secondary metabolite biosynthesis. Its function is as follows. Monooxygenase; part of the gene cluster that mediates the biosynthesis of the tetrahydroxanthone dimer secalonic acid D. The pathway begins with the synthesis of atrochrysone thioester by the polyketide synthase AacuL. The atrochrysone carboxyl ACP thioesterase AacuM then breaks the thioester bond and releases the atrochrysone carboxylic acid from AacuL. Atrochrysone carboxylic acid is decarboxylated by the decarboxylase AacuI, and oxidized by the anthrone oxygenase AacuG to yield emodin. Emodin is then reduced to emodin hydroquinone by a yet unidentified oxidoreductase. A-ring reduction by the short chain dehydrogenase AacuN, dehydration by the scytalone dehydratase-like protein AacuK and probable spontaneous re-oxidation, results in overall deoxygenation to chrysophanol. Baeyer-Villiger oxidation by the Baeyer-Villiger monooxygenase (BVMO) AacuH then yields monodictyphenone. Monodictyphenone is transformed into compounds with the tetrahydroxanthone skeleton via methylesterification by the methyltransferase AacuQ, followed by the action of the flavin-dependent monooxygenase AacuC, the isomerase AacuP, and the short chain dehydrogenase/reductase AacuF or AacuD. AacuF and AacuD should accept the same compound as a substrate but perform the ketoreduction with a different stereoselectivity, thus yielding blennolides B and A, respectively. In the final step of the biosynthesis, the cytochrome P450 monooxygenase AacuE accepts blennolide B and/or blennolide A to conduct the dimerization reaction to furnish the tetrahydroxanthone dimers, secalonic acids D, B, and F. The sequence is that of Monooxygenase AacuP from Aspergillus aculeatus (strain ATCC 16872 / CBS 172.66 / WB 5094).